The primary structure comprises 1025 residues: NQIKKSNTSTGARIPKAMTNPADNFAGGQWKPPGRRSARTSATGMFVCEHCLRAFTTNTGRGLHIKRAHEEQANEAITTERSRARWTNEEMEAVQAEIDCEGRTAINQEILRIIPYQRTIDAIKCLRKQQKYKTIRERVANRRAENRARETELTRLETADEDPASQEQDNPNMSLKNWLKEVIESDDDRLCADLRTAIEMALAGQSPLDVCTVGCYQYTMTNLPLVPVRLGGPIYWCNAQSRSNPGETQRRQTIKESNNSWKKNMSKAAHIVLDGDTDACPAGLEGTEASGAIMRAGCPTTRHLRSRMQGEIKNLWRPISNDEIKEVEACKRTAAGPDGMTTTAWNSIDECIKSLFNMIMYHGQCPRRYLDSRTVLIPKEPGTMDPACFRPLSIASVALRHFHRILANRIGEHGLLDTRQRAFIVADGVAENTSLLSAMIKEARMKIKGLYIAILDVKKAFDSVEHRSILDALRRKKLPLEMRNYIMWVYRNSKTRLEVVKTKGRWIRPARGVRQGDPLSPLLFNCVMDAVLRRLPENTGFLMGAEKIGALVFADDLVLLAETREGLQASLSRIEAGLQEQGLEMMPRKCHTLALVPSGKEKKIKVETHKPFTVGNQEITQLGHADQWKYLGVVYNSYGPIQVKINIAGDLQRVTAAPLKPQQRMAILGMFLIPRFIHKLVLGRTSNADVRKGDKIIRKTVRGWLRLPHDTPIGYFHAPIKEGGLGIPAFESRIPELLKSRIEALGASNMQTARSLLGGDWVAERKKWINTQKIKNSEWAQKLHLTTDGKDLRDTRKAEASYSWIRDIHVAIPASVWIKYHHTRINALPTLMRMSRGRRTNGNALCRAGCGLPETLYHVVQQCPRTHGGRVLRHDKIAEQVAIFMQEKGWLVLREAHIRTSVGLRKPDIIARKGQDCKIIDCQIVTTGNDIRIQHERKIQYYASNWELRRSAATMIGHQGQVSVEAITISWKGVWEPRSYCLLRDCGIPKVKIKGLTTRVLLGAYLNFNTFSKATYRTERRRTAN.

Positions 1–11 are enriched in polar residues; sequence NQIKKSNTSTG. Residues 1–38 form a disordered region; that stretch reads NQIKKSNTSTGARIPKAMTNPADNFAGGQWKPPGRRSA. The C2H2-type zinc finger occupies 46–69; it reads FVCEHCLRAFTTNTGRGLHIKRAH. Over residues 146–158 the composition is skewed to basic and acidic residues; sequence NRARETELTRLET. A disordered region spans residues 146–172; the sequence is NRARETELTRLETADEDPASQEQDNPN. Positions 358–635 constitute a Reverse transcriptase domain; that stretch reads MIMYHGQCPR…DQWKYLGVVY (278 aa). A nucleic acid-binding endonuclease region spans residues 755–1025; that stretch reads SLLGGDWVAE…YRTERRRTAN (271 aa).

The enzyme catalyses DNA(n) + a 2'-deoxyribonucleoside 5'-triphosphate = DNA(n+1) + diphosphate. The sequence is that of Retrovirus-related Pol polyprotein from type-1 retrotransposable element R2 from Nasonia vitripennis (Parasitic wasp).